We begin with the raw amino-acid sequence, 248 residues long: Proteasome subunit alpha type-3 (248 aa).

Belongs to the peptidase T1A family. In terms of assembly, the 26S proteasome consists of a 20S proteasome core and two 19S regulatory subunits. The 20S proteasome core is composed of 28 subunits that are arranged in four stacked rings, resulting in a barrel-shaped structure. The two end rings are each formed by seven alpha subunits, and the two central rings are each formed by seven beta subunits. The catalytic chamber with the active sites is on the inside of the barrel.

Its subcellular location is the cytoplasm. The protein resides in the nucleus. The proteasome is a multicatalytic proteinase complex which is characterized by its ability to cleave peptides with Arg, Phe, Tyr, Leu, and Glu adjacent to the leaving group at neutral or slightly basic pH. The proteasome has an ATP-dependent proteolytic activity. This Dictyostelium discoideum (Social amoeba) protein is Proteasome subunit alpha type-3 (psmA3).